The chain runs to 536 residues: Protein scd2/ral3 (536 aa).

One can recognise an SH3 1 domain in the interval 24 to 86; the sequence is PPRKVIRALY…PVSHFEEIGK (63 aa). Residues 88–115 form a disordered region; that stretch reads VKSERDSDGSGQISFTDLTTNSSTTRSS. Low complexity predominate over residues 101–115; sequence SFTDLTTNSSTTRSS. An SH3 2 domain is found at 123-185; the sequence is SQPLFGIVQF…PLSFIQLRDL (63 aa). The region spanning 293 to 413 is the PX domain; the sequence is SSEPTVVAAM…LFFLPLDGDV (121 aa). A PB1 domain is found at 459 to 533; it reads TCKVKVRLGD…ESGVLLFAER (75 aa).

As to quaternary structure, scd1, scd2, cdc42, and ras1, in its GTP-bound state, act cooperatively to form a protein complex.

Functionally, required for mating and morphogenesis. Interacts directly with scd1 and with cdc42. May bridge and facilitate scd1 and cdc42 interactions. The polypeptide is Protein scd2/ral3 (scd2) (Schizosaccharomyces pombe (strain 972 / ATCC 24843) (Fission yeast)).